We begin with the raw amino-acid sequence, 355 residues long: UDP-N-acetylglucosamine--N-acetylmuramyl-(pentapeptide) pyrophosphoryl-undecaprenol N-acetylglucosamine transferase (355 aa).

UDP-N-acetyl-alpha-D-glucosamine-binding positions include 14–16, N126, R162, S190, I244, and Q289; that span reads TGG.

This sequence belongs to the glycosyltransferase 28 family. MurG subfamily.

Its subcellular location is the cell inner membrane. The catalysed reaction is di-trans,octa-cis-undecaprenyl diphospho-N-acetyl-alpha-D-muramoyl-L-alanyl-D-glutamyl-meso-2,6-diaminopimeloyl-D-alanyl-D-alanine + UDP-N-acetyl-alpha-D-glucosamine = di-trans,octa-cis-undecaprenyl diphospho-[N-acetyl-alpha-D-glucosaminyl-(1-&gt;4)]-N-acetyl-alpha-D-muramoyl-L-alanyl-D-glutamyl-meso-2,6-diaminopimeloyl-D-alanyl-D-alanine + UDP + H(+). The protein operates within cell wall biogenesis; peptidoglycan biosynthesis. Its function is as follows. Cell wall formation. Catalyzes the transfer of a GlcNAc subunit on undecaprenyl-pyrophosphoryl-MurNAc-pentapeptide (lipid intermediate I) to form undecaprenyl-pyrophosphoryl-MurNAc-(pentapeptide)GlcNAc (lipid intermediate II). The chain is UDP-N-acetylglucosamine--N-acetylmuramyl-(pentapeptide) pyrophosphoryl-undecaprenol N-acetylglucosamine transferase from Paracidovorax citrulli (strain AAC00-1) (Acidovorax citrulli).